The chain runs to 312 residues: Olfactory receptor 6C68 (312 aa).

Residues 1 to 23 (MRKHTAITTFILLGLTEDPQLQV) are Extracellular-facing. Residues 24–44 (LLFMFLFITYMLSVTGKLTII) traverse the membrane as a helical segment. The Cytoplasmic segment spans residues 45 to 55 (ALTMLDPHLKT). A helical transmembrane segment spans residues 56–76 (PMYFFLQNLSFLEISFTATCV). Residues 77 to 95 (PRFLYSISTGNKIITYNAC) are Extracellular-facing. A disulfide bridge links Cys95 with Cys177. Residues 96–116 (VIQLFFADLFGVTEFFLLATM) traverse the membrane as a helical segment. Residues 117–143 (SYDRYVAICKPLHYMAIMSNKVCKTMV) are Cytoplasmic-facing. Residues 144-164 (ICCWMAALMIILPPLSLGFHL) traverse the membrane as a helical segment. The Extracellular portion of the chain corresponds to 165–197 (EFCDSNVINHFGCDALPILKIPCSDTSLIEQMV). The helical transmembrane segment at 198–218 (VASAVLTFIITLVCVVLSYTY) threads the bilayer. The Cytoplasmic segment spans residues 219-239 (IIRTILKFPSVQQKKKAFSTC). The chain crosses the membrane as a helical span at residues 240 to 260 (SSHITVVSITYGSCIFIYIKP). The Extracellular segment spans residues 261-271 (SAKEEVNINKG). Residues 272–292 (VSVLISSISPMLNSFIYTLRN) form a helical membrane-spanning segment. Residues 293–312 (EQVKQAFHDSLKKIAFRLKK) are Cytoplasmic-facing.

Belongs to the G-protein coupled receptor 1 family.

The protein resides in the cell membrane. Its function is as follows. Odorant receptor. This is Olfactory receptor 6C68 (OR6C68) from Homo sapiens (Human).